Reading from the N-terminus, the 311-residue chain is Olfactory receptor 10G7 (311 aa).

At 1 to 23 (MSNATLLTAFILTGLPHAPGLDA) the chain is on the extracellular side. The N-linked (GlcNAc...) asparagine glycan is linked to Asn-3. Residues 24 to 44 (PLFGIFLVVYVLTVLGNLLIL) form a helical membrane-spanning segment. The Cytoplasmic portion of the chain corresponds to 45–52 (LVIRVDSH). The chain crosses the membrane as a helical span at residues 53-73 (LHTPMYYFLTNLSFIDMWFST). At 74–98 (VTVPKMLMTLVSPSGRTISFHSCVA) the chain is on the extracellular side. An intrachain disulfide couples Cys-96 to Cys-188. A helical transmembrane segment spans residues 99–119 (QLYFFHFLGSTECFLYTVMSY). Over 120-138 (DRYLAISYPLRYTNMMTGR) the chain is Cytoplasmic. Residues 139–159 (SCALLATGTWLSGSLHSAVQT) form a helical membrane-spanning segment. The Extracellular segment spans residues 160 to 196 (ILTFHLPYCGPNQIQHYFCDAPPILKLACADTSANEM). The helical transmembrane segment at 197–216 (VIFVNIGLVASGCFVLIVLS) threads the bilayer. The Cytoplasmic portion of the chain corresponds to 217–236 (YVSIVCSILRIRTSEGRHRA). A helical membrane pass occupies residues 237 to 257 (FQTCASHCIVVLCFFGPGLFI). The Extracellular segment spans residues 258-268 (YLRPGSRDALH). A helical membrane pass occupies residues 269 to 289 (GVVAVFYTTLTPLFNPVVYTL). Residues 290–311 (RNKEVKKALLKLKNGSVFAQGE) are Cytoplasmic-facing.

This sequence belongs to the G-protein coupled receptor 1 family.

It localises to the cell membrane. Its function is as follows. Odorant receptor. The sequence is that of Olfactory receptor 10G7 (OR10G7) from Homo sapiens (Human).